The following is a 465-amino-acid chain: MAP kinase-interacting serine/threonine-protein kinase 2 (465 aa).

Positions 23 to 72 (ELAFSLDQPDHGDSDFGLQCSARPDMPASQPIDIPDAKKRGKKKKRGRAT) are disordered. A Nuclear localization signal motif is present at residues 60-66 (KKRGKKK). Phosphoserine is present on Ser74. The Protein kinase domain occupies 84–388 (QLQEDVLGEG…TPMVLQRNSC (305 aa)). Residues 90 to 98 (LGEGAHARV) and Lys113 contribute to the ATP site. 160–162 (EKM) is a binding site for staurosporine. Asp205 serves as the catalytic Proton acceptor. Glu209 provides a ligand contact to staurosporine. 2 positions are modified to phosphothreonine: Thr244 and Thr249. Zn(2+) is bound by residues Cys299, Cys311, and Cys314. A Phosphothreonine modification is found at Thr379. A phosphoserine mark is found at Ser437 and Ser440. Positions 444-448 (LAQRR) match the MAP kinase binding motif. The residue at position 452 (Ser452) is a Phosphoserine.

The protein belongs to the protein kinase superfamily. CAMK Ser/Thr protein kinase family. In terms of assembly, monomer. Interacts with the C-terminal regions of EIF4G1 and EIF4G2; this interaction is promoted when MAPK pathways are repressed but repressed upon ERK proteins activation. Also binds to dephosphorylated MAPK3/ERK1 and MAPK1/ERK2. Isoform 1 interaction with phosphorylated MAPK3/ERK1 and MAPK1/ERK2 protects it from dephosphorylation and inactivation. Isoform 2 interacts with ESR2 and EIF4E in the nucleus. Mg(2+) is required as a cofactor. Zn(2+) serves as cofactor. Post-translationally, dual phosphorylation of Thr-244 and Thr-249 activates the kinase. Phosphorylation of Thr-379 activates the kinase. Phosphorylated upon arsenic trioxide As(2)O(3) treatment. Phosphorylated by MAPK1/ERK2, MAPK11 and MAPK14. Dephosphorylated by PP2A. Ubiquitously expressed in all tissues examined. Isoform 2 is expressed at higher levels in the ovary than is isoform 1.

Its subcellular location is the nucleus. The protein localises to the PML body. It localises to the cytoplasm. It catalyses the reaction L-seryl-[protein] + ATP = O-phospho-L-seryl-[protein] + ADP + H(+). It carries out the reaction L-threonyl-[protein] + ATP = O-phospho-L-threonyl-[protein] + ADP + H(+). Its activity is regulated as follows. Inhibited by CGP57380 and staurosporine. Activated by phosphorylation in a negative-feedback regulatory manner in response to chemotherapy (e.g. cytarabine) and thus impairs the generation of antileukemic responses. Functionally, serine/threonine-protein kinase that phosphorylates SFPQ/PSF, HNRNPA1 and EIF4E. May play a role in the response to environmental stress and cytokines. Appears to regulate translation by phosphorylating EIF4E, thus increasing the affinity of this protein for the 7-methylguanosine-containing mRNA cap. Required for mediating PP2A-inhibition-induced EIF4E phosphorylation. Triggers EIF4E shuttling from cytoplasm to nucleus. Isoform 1 displays a high basal kinase activity, but isoform 2 exhibits a very low kinase activity. Acts as a mediator of the suppressive effects of IFNgamma on hematopoiesis. Negative regulator for signals that control generation of arsenic trioxide As(2)O(3)-dependent apoptosis and anti-leukemic responses. Involved in anti-apoptotic signaling in response to serum withdrawal. This Homo sapiens (Human) protein is MAP kinase-interacting serine/threonine-protein kinase 2 (MKNK2).